The sequence spans 567 residues: Hexose transporter HXT15 (567 aa).

A compositionally biased stretch (polar residues) spans 1-19 (MASEQSSPEINADNLNSSA). The segment at 1 to 32 (MASEQSSPEINADNLNSSAADVHVQPPGEKEW) is disordered. At 1-55 (MASEQSSPEINADNLNSSAADVHVQPPGEKEWSDGFYDKEVINGNTPDAPKRGFL) the chain is on the cytoplasmic side. A helical membrane pass occupies residues 56 to 76 (GYLIIYLLCYPVSFGGFLPGW). The Extracellular portion of the chain corresponds to 77-112 (DSGITAGFINMDNFKMNFGSYKHSTGEYYLSNVRMG). The chain crosses the membrane as a helical span at residues 113 to 133 (LLVAMFSVGCSIGGVAFARLA). The Cytoplasmic segment spans residues 134–139 (DTLGRR). The helical transmembrane segment at 140 to 160 (LAIVIVVLVYMVGAIIQISSN) threads the bilayer. At 161–170 (HKWYQYFVGK) the chain is on the extracellular side. The chain crosses the membrane as a helical span at residues 171–191 (IIYGLGAGGCSVLCPMLLSEI). Over 192–197 (APTDLR) the chain is Cytoplasmic. The helical transmembrane segment at 198–218 (GGLVSLYQLNMTFGIFLGYCS) threads the bilayer. The Extracellular portion of the chain corresponds to 219 to 232 (VYGTRKYSNTAQWR). A helical membrane pass occupies residues 233 to 253 (IPVGLCFLWALIIIVGMLLVP). Residues 254–336 (ESPRYLIECE…VQTFLQLTGE (83 aa)) lie on the Cytoplasmic side of the membrane. A helical transmembrane segment spans residues 337 to 353 (NYFFFYGTTIFKSVGLT). Residues 354 to 359 (DGFETS) lie on the Extracellular side of the membrane. Residues 360-377 (IVLGTVNFFSTIIAVMVV) form a helical membrane-spanning segment. The Cytoplasmic portion of the chain corresponds to 378 to 384 (DKIGRRK). A helical transmembrane segment spans residues 385 to 405 (CLLFGAASMMACMVIFASIGV). Over 406–427 (KCLYPHGQDGPSSKGAGNAMIV) the chain is Extracellular. The helical transmembrane segment at 428–448 (FTCFYIFCFATTWAPVAYIVV) threads the bilayer. The Cytoplasmic portion of the chain corresponds to 449-465 (AESFPSKVKSKAMSIST). Residues 466–486 (AFNWLWQFLIGFFTPFITGSI) traverse the membrane as a helical segment. Histidine 487 is a topological domain (extracellular). The chain crosses the membrane as a helical span at residues 488–508 (FYYGYVFVGCLVAMFLYVFFF). The Cytoplasmic segment spans residues 509–567 (LPETIGLSLEEIQLLYEEGIKPWKSASWVPPSRRGASSRETEAKKKSWKEVLKFPKSFN). Residues 533–555 (SASWVPPSRRGASSRETEAKKKS) form a disordered region. Positions 545–555 (SSRETEAKKKS) are enriched in basic and acidic residues.

This sequence belongs to the major facilitator superfamily. Sugar transporter (TC 2.A.1.1) family.

It localises to the membrane. Probable glucose transporter. This Saccharomyces cerevisiae (strain ATCC 204508 / S288c) (Baker's yeast) protein is Hexose transporter HXT15 (HXT15).